Here is a 297-residue protein sequence, read N- to C-terminus: Alpha-tubulin N-acetyltransferase 1 (297 aa).

The 184-residue stretch at 1-184 (MDFPYDLNAL…NNFVVFAGFF (184 aa)) folds into the N-acetyltransferase domain. Residues 118–131 (FYVTETLQRHGYGS) and 154–163 (SPKFLSFLEK) contribute to the acetyl-CoA site. The segment at 226–297 (FVRPGGPPHS…SLNRSRLSFH (72 aa)) is disordered. Over residues 230–240 (GGPPHSPPLLP) the composition is skewed to pro residues. Over residues 241-264 (SSPQSRSLSVGSSPSRAPLRPAAA) the composition is skewed to low complexity. Composition is skewed to polar residues over residues 266–278 (VLQQGQTPSSPLN) and 286–297 (TSSLNRSRLSFH).

This sequence belongs to the acetyltransferase ATAT1 family. As to quaternary structure, monomer.

It localises to the cytoplasm. It is found in the membrane. Its subcellular location is the clathrin-coated pit. The protein localises to the cell junction. The protein resides in the focal adhesion. It localises to the cell projection. It is found in the axon. Its subcellular location is the cytoskeleton. The protein localises to the spindle. It carries out the reaction L-lysyl-[alpha-tubulin] + acetyl-CoA = N(6)-acetyl-L-lysyl-[alpha-tubulin] + CoA + H(+). Specifically acetylates 'Lys-40' in alpha-tubulin on the lumenal side of microtubules. Promotes microtubule destabilization and accelerates microtubule dynamics; this activity may be independent of acetylation activity. Acetylates alpha-tubulin with a slow enzymatic rate, due to a catalytic site that is not optimized for acetyl transfer. Enters the microtubule through each end and diffuses quickly throughout the lumen of microtubules. Acetylates only long/old microtubules because of its slow acetylation rate since it does not have time to act on dynamically unstable microtubules before the enzyme is released. May be involved in neuron development. Acetylates alpha-tubulin in neurons, but not in cilia. This chain is Alpha-tubulin N-acetyltransferase 1, found in Danio rerio (Zebrafish).